The chain runs to 259 residues: Bisphosphoglycerate mutase (259 aa).

Position 2 is an N-acetylserine (Ser-2). Substrate contacts are provided by residues Arg-10–Asn-17, Cys-23–Ser-24, Arg-62, Glu-89–Tyr-92, Arg-100, and Arg-116–Arg-117. The Tele-phosphohistidine intermediate role is filled by His-11. Glu-89 acts as the Proton donor/acceptor in catalysis. Thr-122 carries the post-translational modification Phosphothreonine. Residue Gly-189–Asn-190 coordinates substrate.

Belongs to the phosphoglycerate mutase family. BPG-dependent PGAM subfamily. As to quaternary structure, homodimer.

The catalysed reaction is (2R)-3-phospho-glyceroyl phosphate = (2R)-2,3-bisphosphoglycerate + H(+). The enzyme catalyses (2R)-2-phosphoglycerate = (2R)-3-phosphoglycerate. At alkaline pH BPGM favors the synthase reaction; however, at lower pH the phosphatase reaction is dominant. Inhibited by citrate. Its function is as follows. Plays a major role in regulating hemoglobin oxygen affinity by controlling the levels of its allosteric effector 2,3-bisphosphoglycerate (2,3-BPG). Also exhibits mutase (EC 5.4.2.11) activity. The sequence is that of Bisphosphoglycerate mutase (BPGM) from Macaca fascicularis (Crab-eating macaque).